The following is a 4834-amino-acid chain: E3 ubiquitin-protein ligase HERC2 (4834 aa).

Residues 50–88 form a disordered region; the sequence is TESTQNGELPPRKDDSVEPSGTKKEDLNDKEKKDEEETP. A compositionally biased stretch (basic and acidic residues) spans 59–84; that stretch reads PPRKDDSVEPSGTKKEDLNDKEKKDE. The residue at position 272 (Thr272) is a Phosphothreonine. Residues 415-461 form an RCC1 1-1 repeat; it reads PTSHKGSLQEVIGWGLIGWKYYANVIGPIQCEGLANLGVTQIACAEK. One copy of the RCC1 1-2 repeat lies at 462–512; the sequence is RFLILSRNGRVYTQAYNSDTLAPQLVQGLASRNIVKIAAHSDGHHYLALAA. The stretch at 513–568 is one RCC1 1-3 repeat; sequence TGEVYSWGCGDGGRLGHGDTVPLEEPKVISAFSGKQAGKHVVHIACGSTYSAAITA. An RCC1 1-4 repeat occupies 569–620; that stretch reads EGELYTWGRGNYGRLGHGSSEDEAIPMLVAGLKGLKVIDVACGSGDAQTLAV. One copy of the RCC1 1-5 repeat lies at 623 to 674; that stretch reads NGQVWSWGDGDYGKLGRGGSDGCKTPKLIEKLQDLDVVKVRCGSQFSIALTK. Thr647 carries the phosphothreonine modification. An RCC1 1-6 repeat occupies 675 to 726; the sequence is DGQVYSWGKGDNQRLGHGTEEHVRYPKLLEGLQGKKVIDVAAGSTHCLALTE. The stretch at 728 to 778 is one RCC1 1-7 repeat; that stretch reads SEVHSWGSNDQCQHFDTLRVTKPEPAALPGLDTKHIVGIACGPAQSFAWSS. Residues 948-980 adopt a coiled-coil conformation; sequence LHAAITAEIQDIEAKKEAQKEKEIDEQEANAST. Residues 1207 to 1283 form the Cytochrome b5 heme-binding domain; it reads VTLIRKADLE…MHAFCVGQYL (77 aa). The segment at 1555-1575 is disordered; it reads RKKRVPKKPESTDDEEKIGNE. Residues 1566–1575 show a composition bias toward acidic residues; it reads TDDEEKIGNE. Ser1577 is modified (phosphoserine). Residues 1859 to 1932 form the MIB/HERC2 domain; the sequence is SGPELAAMMK…KYDLKLAELP (74 aa). The interval 1933 to 1958 is disordered; sequence AAAQPSAEDSDTEDDSEAEQTERNIH. Residues 1940 to 1951 are compositionally biased toward acidic residues; the sequence is EDSDTEDDSEAE. Ser1942 is modified (phosphoserine). Phosphothreonine is present on Thr1944. Ser2454 bears the Phosphoserine mark. A CPH domain is found at 2554 to 2630; it reads RADFLSNDDY…RYIHVELIGY (77 aa). Residues 2703–2755 form a ZZ-type zinc finger; the sequence is HPGVTCDGCQMFPINGSRFKCRNCDDFDFCETCFKTKKHNTRHTFGRINEPGQ. The Zn(2+) site is built by Cys2708, Cys2711, Cys2723, Cys2726, Cys2732, Cys2735, His2741, and His2745. The 178-residue stretch at 2759–2936 folds into the DOC domain; it reads FCGRSGKQLK…ASDNEEEEDE (178 aa). Residue Ser2928 is modified to Phosphoserine. Residues 2958 to 3009 form an RCC1 2-1 repeat; the sequence is RTKVFVWGLNDKDQLGGLKGSKIKVPSFSETLSALNVVQVAGGSKSLFAVTV. One copy of the RCC1 2-2 repeat lies at 3010-3064; sequence EGKVYACGEATNGRLGLGISSGTVPIPRQITALSSYVVKKVAVHSGGRHATALTV. The stretch at 3065 to 3116 is one RCC1 2-3 repeat; that stretch reads DGKVFSWGEGDDGKLGHFSRMNCDKPRLIEALKTKRIRDIACGSSHSAALTS. An RCC1 2-4 repeat occupies 3118-3168; that stretch reads GELYTWGLGEYGRLGHGDNTTQLKPKMVKVLLGHRVIQVACGSRDAQTLAL. Residues 3171-3222 form an RCC1 2-5 repeat; that stretch reads EGLVFSWGDGDFGKLGRGGSEGCNIPQNIERLNGQGVCQIECGAQFSLALTK. Residues 3224 to 3274 form an RCC1 2-6 repeat; that stretch reads GVVWTWGKGDYFRLGHGSDVHVRKPQVVEGLRGKKIVHVAVGALHCLAVTD. An RCC1 2-7 repeat occupies 3275–3326; that stretch reads SGQVYAWGDNDHGQQGNGTTTVNRKPTLVQGLEGQKITRVACGSSHSVAWTT. Polar residues-rich tracts occupy residues 3602-3611 and 3618-3629; these read SQSGRLSSQP and HPYTDDTSTSGT. The interval 3602–3629 is disordered; it reads SQSGRLSSQPVVVESSHPYTDDTSTSGT. An RCC1 3-1 repeat occupies 3951-4002; that stretch reads SGTIYGWGHNHRGQLGGIEGAKVKVPTPCEALATLRPVQLIGGEQTLFAVTA. One copy of the RCC1 3-2 repeat lies at 4004-4056; it reads GKLYATGYGAGGRLGIGGTESVSTPTLLESIQHVFIKKVAVNSGGKHCLALSS. The RCC1 3-3 repeat unit spans residues 4058–4108; that stretch reads GEVYSWGEAEDGKLGHGNRSPCDRPRVIESLRGIEVVDVAAGGAHSACVTA. One copy of the RCC1 3-4 repeat lies at 4110–4162; it reads GDLYTWGKGRYGRLGHSDSEDQLKPKLVEALQGHRVVDIACGSGDAQTLCLTD. The stretch at 4164–4214 is one RCC1 3-5 repeat; it reads DTVWSWGDGDYGKLGRGGSDGCKVPMKIDSLTGLGVVKVECGSQFSVALTK. One copy of the RCC1 3-6 repeat lies at 4216-4266; it reads GAVYTWGKGDYHRLGHGSDDHVRRPRQVQGLQGKKVIAIATGSLHCVCCTE. An RCC1 3-7 repeat occupies 4268–4318; it reads GEVYTWGDNDEGQLGDGTTNAIQRPRLVAALQGKKVNRVACGSAHTLAWST. Residues 4457–4794 enclose the HECT domain; the sequence is DSLLLPHRVW…IHFCKSIDTD (338 aa). The active-site Glycyl thioester intermediate is the Cys4762. The disordered stretch occupies residues 4804 to 4834; that stretch reads EPAADDSSDDSDNEDVDSFASDSTQDYLTGH. Residues 4806 to 4820 are compositionally biased toward acidic residues; it reads AADDSSDDSDNEDVD. Phosphoserine occurs at positions 4810, 4811, and 4814. The segment covering 4823-4834 has biased composition (polar residues); the sequence is ASDSTQDYLTGH. Phosphothreonine is present on Thr4827.

In terms of assembly, interacts (when phosphorylated at Thr-4827 and sumoylated) with RNF8 (via FHA domain); this interaction increases after ionizing radiation (IR) treatment. Interacts with XPA. Interacts with NEURL4. Via its interaction with NEURL4, may indirectly interact with CCP110 and CEP97. Phosphorylation at Thr-4827 is required for interaction with RNF8. In terms of processing, sumoylated with SUMO1 by PIAS4 in response to double-strand breaks (DSBs), promoting the interaction with RNF8.

It localises to the cytoplasm. It is found in the cytoskeleton. The protein resides in the microtubule organizing center. The protein localises to the centrosome. Its subcellular location is the centriole. It localises to the nucleus. The enzyme catalyses S-ubiquitinyl-[E2 ubiquitin-conjugating enzyme]-L-cysteine + [acceptor protein]-L-lysine = [E2 ubiquitin-conjugating enzyme]-L-cysteine + N(6)-ubiquitinyl-[acceptor protein]-L-lysine.. It participates in protein modification; protein ubiquitination. In terms of biological role, E3 ubiquitin-protein ligase that regulates ubiquitin-dependent retention of repair proteins on damaged chromosomes. Recruited to sites of DNA damage in response to ionizing radiation (IR) and facilitates the assembly of UBE2N and RNF8 promoting DNA damage-induced formation of 'Lys-63'-linked ubiquitin chains. Acts as a mediator of binding specificity between UBE2N and RNF8. Involved in the maintenance of RNF168 levels. E3 ubiquitin-protein ligase that promotes the ubiquitination and proteasomal degradation of XPA which influences the circadian oscillation of DNA excision repair activity. By controlling the steady-state expression of the IGF1R receptor, indirectly regulates the insulin-like growth factor receptor signaling pathway. Also modulates iron metabolism by regulating the basal turnover of FBXL5. In Homo sapiens (Human), this protein is E3 ubiquitin-protein ligase HERC2.